The sequence spans 449 residues: Telomere resolvase ResT (449 aa).

The cofactor is No cofactors were found to be necessary..

Its subcellular location is the cytoplasm. It is found in the nucleoid. Its function is as follows. Catalyzes the conservative, sequence-specific DNA breakage and reunion reaction that generates two hairpin telomeres from a replicated telomere substrate. Breaks two phosphodiester bonds in a single DNA duplex and joins each end with the opposite DNA strand to form covalently closed hairpin telomeres. In vitro relaxed-circular, open-circular and linearized plasmids, but not supercoiled DNA, are all substrates. Cleavage is position-dependent relative to conserved sequence elements. The sequence is that of Telomere resolvase ResT from Borreliella burgdorferi (strain ATCC 35210 / DSM 4680 / CIP 102532 / B31) (Borrelia burgdorferi).